The sequence spans 306 residues: Palmitoyl-protein thioesterase ABHD10, mitochondrial (306 aa).

The transit peptide at 1–52 directs the protein to the mitochondrion; the sequence is MAVARLAAVAAWVPCRSWGWAAVPFGPHRGLSVLLARIPQRAPRWLPACRQK. Residues 78-178 enclose the AB hydrolase-1 domain; sequence IIFIPGYLSY…VVALIGVATA (101 aa). Catalysis depends on charge relay system residues S152, D249, and H279.

It belongs to the AB hydrolase superfamily.

The protein localises to the mitochondrion. It carries out the reaction S-hexadecanoyl-L-cysteinyl-[protein] + H2O = L-cysteinyl-[protein] + hexadecanoate + H(+). It catalyses the reaction mycophenolic acid O-acyl-beta-D-glucuronide + H2O = mycophenolate + D-glucuronate + H(+). Its activity is regulated as follows. Inhibited by palmostatin-B. In terms of biological role, acts as an acyl-protein thioesterase that hydrolyzes fatty acids from acylated residues in proteins. Regulates the mitochondrial S-depalmitoylation of the nucleophilic active site residue of peroxiredoxin-5/PRDX5, a key antioxidant protein, therefore modulating mitochondrial antioxidant ability. Also catalyzes the deglucuronidation of mycophenolic acid acyl-glucuronide, an active metabolite of the immunosuppressant drug mycophenolate. The sequence is that of Palmitoyl-protein thioesterase ABHD10, mitochondrial from Homo sapiens (Human).